The sequence spans 161 residues: MSGKGAPELSVRNCGDLRVAVIAAQWHEKVMDGLVDGALRALHELGIDEPTLLRVPGSFELPVVAKVLAGRGYDAIVALGVVIRGGTPHFDFVCQGVTQGLTQVSVDTGVPVGFGVLTCDTEEQALDRAGIEGSHEDKGHEAVTAAVATAATLRSVSEPWR.

5-amino-6-(D-ribitylamino)uracil-binding positions include Trp-26, 58 to 60, and 81 to 83; these read SFE and VVI. 86 to 87 is a binding site for (2S)-2-hydroxy-3-oxobutyl phosphate; the sequence is GT. Residue His-89 is the Proton donor of the active site. Phe-114 contacts 5-amino-6-(D-ribitylamino)uracil. Arg-128 serves as a coordination point for (2S)-2-hydroxy-3-oxobutyl phosphate.

It belongs to the DMRL synthase family.

It carries out the reaction (2S)-2-hydroxy-3-oxobutyl phosphate + 5-amino-6-(D-ribitylamino)uracil = 6,7-dimethyl-8-(1-D-ribityl)lumazine + phosphate + 2 H2O + H(+). Its pathway is cofactor biosynthesis; riboflavin biosynthesis; riboflavin from 2-hydroxy-3-oxobutyl phosphate and 5-amino-6-(D-ribitylamino)uracil: step 1/2. Catalyzes the formation of 6,7-dimethyl-8-ribityllumazine by condensation of 5-amino-6-(D-ribitylamino)uracil with 3,4-dihydroxy-2-butanone 4-phosphate. This is the penultimate step in the biosynthesis of riboflavin. The sequence is that of 6,7-dimethyl-8-ribityllumazine synthase from Streptomyces avermitilis (strain ATCC 31267 / DSM 46492 / JCM 5070 / NBRC 14893 / NCIMB 12804 / NRRL 8165 / MA-4680).